A 54-amino-acid polypeptide reads, in one-letter code: Photosystem II reaction center protein K (54 aa).

A propeptide spanning residues 1–17 is cleaved from the precursor; that stretch reads MLLEHVTITLLNNTSFA. Residues 29 to 49 form a helical membrane-spanning segment; that stretch reads LIDVLPIIPLLFLLLAFVWQA.

The protein belongs to the PsbK family. In terms of assembly, PSII is composed of 1 copy each of membrane proteins PsbA, PsbB, PsbC, PsbD, PsbE, PsbF, PsbH, PsbI, PsbJ, PsbK, PsbL, PsbM, PsbT, PsbY, PsbZ, Psb30/Ycf12, at least 3 peripheral proteins of the oxygen-evolving complex and a large number of cofactors. It forms dimeric complexes.

It localises to the plastid. The protein localises to the chloroplast thylakoid membrane. In terms of biological role, one of the components of the core complex of photosystem II (PSII). PSII is a light-driven water:plastoquinone oxidoreductase that uses light energy to abstract electrons from H(2)O, generating O(2) and a proton gradient subsequently used for ATP formation. It consists of a core antenna complex that captures photons, and an electron transfer chain that converts photonic excitation into a charge separation. The protein is Photosystem II reaction center protein K of Euglena mutabilis.